The primary structure comprises 429 residues: Neuronal pentraxin-2 (429 aa).

The N-terminal stretch at 1–14 (MLALLTVGVALAVA) is a signal peptide. Residues Asn-146 and Asn-187 are each glycosylated (N-linked (GlcNAc...) asparagine). The region spanning 221 to 422 (DAFKVSLPLR…GASKWPVETC (202 aa)) is the Pentraxin (PTX) domain. A disulfide bridge links Cys-251 with Cys-311. Residues Asn-275, Glu-353, Gln-354, Asp-355, and Gln-365 each coordinate Ca(2+). A glycan (N-linked (GlcNAc...) asparagine) is linked at Asn-391.

As to quaternary structure, homooligomer or heterooligomer (probably pentamer) with neuronal pentraxin receptor (NPTXR). Ca(2+) serves as cofactor.

The protein localises to the secreted. In terms of biological role, likely to play role in the modification of cellular properties that underlie long-term plasticity. Binds to agar matrix in a calcium-dependent manner. In Mus musculus (Mouse), this protein is Neuronal pentraxin-2 (Nptx2).